The primary structure comprises 67 residues: Putative antitoxin PF1308 (67 aa).

It belongs to the UPF0165 family.

Functionally, possibly the antitoxin component of a type II toxin-antitoxin (TA) system. This Pyrococcus furiosus (strain ATCC 43587 / DSM 3638 / JCM 8422 / Vc1) protein is Putative antitoxin PF1308.